The chain runs to 156 residues: ATP synthase subunit b 1 (156 aa).

A helical membrane pass occupies residues 5 to 27 (FTLISQAMAFAIFIWFTVRFVWP).

The protein belongs to the ATPase B chain family. F-type ATPases have 2 components, F(1) - the catalytic core - and F(0) - the membrane proton channel. F(1) has five subunits: alpha(3), beta(3), gamma(1), delta(1), epsilon(1). F(0) has three main subunits: a(1), b(2) and c(10-14). The alpha and beta chains form an alternating ring which encloses part of the gamma chain. F(1) is attached to F(0) by a central stalk formed by the gamma and epsilon chains, while a peripheral stalk is formed by the delta and b chains.

It is found in the cell inner membrane. Functionally, f(1)F(0) ATP synthase produces ATP from ADP in the presence of a proton or sodium gradient. F-type ATPases consist of two structural domains, F(1) containing the extramembraneous catalytic core and F(0) containing the membrane proton channel, linked together by a central stalk and a peripheral stalk. During catalysis, ATP synthesis in the catalytic domain of F(1) is coupled via a rotary mechanism of the central stalk subunits to proton translocation. Its function is as follows. Component of the F(0) channel, it forms part of the peripheral stalk, linking F(1) to F(0). The sequence is that of ATP synthase subunit b 1 from Nitrosospira multiformis (strain ATCC 25196 / NCIMB 11849 / C 71).